Reading from the N-terminus, the 94-residue chain is DASH complex subunit dad2 (94 aa).

A coiled-coil region spans residues 18-38 (KLRDSSNDMVQQIETLAAKLE). The interval 72 to 94 (VRIPPSTSNTNASATEQGDVEEV) is disordered. Polar residues predominate over residues 76 to 87 (PSTSNTNASATE).

The protein belongs to the DASH complex DAD2 family. In terms of assembly, component of the DASH complex consisting of ask1, dad1, dad2, dad3, dad4, dam1, duo1, dad5, spc19 and spc34, with a stoichiometry of one copy of each subunit per complex. Multiple DASH complexes oligomerize to form a ring that encircles spindle microtubules and organizes the rod-like NDC80 complexes of the outer kinetochore. DASH complex oligomerization strengthens microtubule attachments. On cytoplasmic microtubules, DASH complexes appear to form patches instead of rings.

Its subcellular location is the nucleus. The protein resides in the cytoplasm. The protein localises to the cytoskeleton. It is found in the spindle. It localises to the chromosome. Its subcellular location is the centromere. The protein resides in the kinetochore. Its function is as follows. Component of the DASH complex that connects microtubules with kinetochores and couples microtubule depolymerisation to chromosome movement; it is involved in retrieving kinetochores to the spindle poles before their re-orientation on the spindle in early mitosis and allows microtubule depolymerization to pull chromosomes apart and resist detachment during anaphase. Kinetochores, consisting of a centromere-associated inner segment and a microtubule-contacting outer segment, play a crucial role in chromosome segregation by mediating the physical connection between centromeric DNA and microtubules. Kinetochores also serve as an input point for the spindle assembly checkpoint, which delays anaphase until all chromosomes have bioriented on the mitotic spindle. The DASH complex mediates bipolar kinetochore-microtubule attachments and facilitates the formation of additional interactions between outer kinetochore components and spindle microtubules. During chromosome movement along the microtubule, it is required both for the sliding of kinetochores along the lateral side of the microtubule and also for microtubule end-on pulling on the kinetochore. Modulates cytoplasmic microtubule dynamics by tracking the plus-end of shortening microtubules and slowing their depolymerization. The protein is DASH complex subunit dad2 of Schizosaccharomyces pombe (strain 972 / ATCC 24843) (Fission yeast).